The sequence spans 580 residues: Arginine--tRNA ligase (580 aa).

The 'HIGH' region motif lies at 131–141 (ANPTGPLHVGH).

Belongs to the class-I aminoacyl-tRNA synthetase family. Monomer.

Its subcellular location is the cytoplasm. It catalyses the reaction tRNA(Arg) + L-arginine + ATP = L-arginyl-tRNA(Arg) + AMP + diphosphate. This is Arginine--tRNA ligase from Roseobacter denitrificans (strain ATCC 33942 / OCh 114) (Erythrobacter sp. (strain OCh 114)).